Here is a 243-residue protein sequence, read N- to C-terminus: Ubiquinone/menaquinone biosynthesis C-methyltransferase UbiE (243 aa).

S-adenosyl-L-methionine-binding positions include T69, D90, and 116–117 (DA).

This sequence belongs to the class I-like SAM-binding methyltransferase superfamily. MenG/UbiE family.

It carries out the reaction a 2-demethylmenaquinol + S-adenosyl-L-methionine = a menaquinol + S-adenosyl-L-homocysteine + H(+). The catalysed reaction is a 2-methoxy-6-(all-trans-polyprenyl)benzene-1,4-diol + S-adenosyl-L-methionine = a 5-methoxy-2-methyl-3-(all-trans-polyprenyl)benzene-1,4-diol + S-adenosyl-L-homocysteine + H(+). It participates in quinol/quinone metabolism; menaquinone biosynthesis; menaquinol from 1,4-dihydroxy-2-naphthoate: step 2/2. Its pathway is cofactor biosynthesis; ubiquinone biosynthesis. Its function is as follows. Methyltransferase required for the conversion of demethylmenaquinol (DMKH2) to menaquinol (MKH2) and the conversion of 2-polyprenyl-6-methoxy-1,4-benzoquinol (DDMQH2) to 2-polyprenyl-3-methyl-6-methoxy-1,4-benzoquinol (DMQH2). The protein is Ubiquinone/menaquinone biosynthesis C-methyltransferase UbiE of Ralstonia nicotianae (strain ATCC BAA-1114 / GMI1000) (Ralstonia solanacearum).